The following is a 454-amino-acid chain: Neuraminidase (454 aa).

The Intravirion segment spans residues 1 to 6; it reads MNPNQK. A helical membrane pass occupies residues 7–27; that stretch reads IITIGSICLVVGLISLILQIG. Positions 11–33 are involved in apical transport and lipid raft association; it reads GSICLVVGLISLILQIGNIISIW. Over 28–454 the chain is Virion surface; sequence NIISIWISHS…GAELPFSIDK (427 aa). The hypervariable stalk region stretch occupies residues 36–75; it reads HSIQTGSQNHTGICNQNIITYKNSTWVKDTTSVILTGNSS. Asn-44, Asn-58, and Asn-73 each carry an N-linked (GlcNAc...) asparagine; by host glycan. The tract at residues 76–454 is head of neuraminidase; the sequence is LCPIRGWAIY…GAELPFSIDK (379 aa). Intrachain disulfides connect Cys-77–Cys-402, Cys-109–Cys-114, Cys-169–Cys-216, Cys-218–Cys-223, Cys-264–Cys-277, Cys-266–Cys-275, Cys-303–Cys-320, and Cys-406–Cys-431. Position 103 (Arg-103) interacts with substrate. Asn-131 is a glycosylation site (N-linked (GlcNAc...) asparagine; by host). Asp-136 acts as the Proton donor/acceptor in catalysis. Arg-137 contacts substrate. N-linked (GlcNAc...) asparagine; by host glycosylation occurs at Asn-220. 262-263 provides a ligand contact to substrate; it reads EE. Arg-278 is a substrate binding site. Residues Asp-279, Gly-283, Asp-309, and Asn-329 each coordinate Ca(2+). Arg-353 contributes to the substrate binding site. Tyr-387 serves as the catalytic Nucleophile.

It belongs to the glycosyl hydrolase 34 family. In terms of assembly, homotetramer. It depends on Ca(2+) as a cofactor. N-glycosylated.

The protein localises to the virion membrane. It is found in the host apical cell membrane. It carries out the reaction Hydrolysis of alpha-(2-&gt;3)-, alpha-(2-&gt;6)-, alpha-(2-&gt;8)- glycosidic linkages of terminal sialic acid residues in oligosaccharides, glycoproteins, glycolipids, colominic acid and synthetic substrates.. With respect to regulation, inhibited by the neuraminidase inhibitors zanamivir (Relenza) and oseltamivir (Tamiflu). These drugs interfere with the release of progeny virus from infected cells and are effective against all influenza strains. Resistance to neuraminidase inhibitors is quite rare. Catalyzes the removal of terminal sialic acid residues from viral and cellular glycoconjugates. Cleaves off the terminal sialic acids on the glycosylated HA during virus budding to facilitate virus release. Additionally helps virus spread through the circulation by further removing sialic acids from the cell surface. These cleavages prevent self-aggregation and ensure the efficient spread of the progeny virus from cell to cell. Otherwise, infection would be limited to one round of replication. Described as a receptor-destroying enzyme because it cleaves a terminal sialic acid from the cellular receptors. May facilitate viral invasion of the upper airways by cleaving the sialic acid moieties on the mucin of the airway epithelial cells. Likely to plays a role in the budding process through its association with lipid rafts during intracellular transport. May additionally display a raft-association independent effect on budding. Plays a role in the determination of host range restriction on replication and virulence. Sialidase activity in late endosome/lysosome traffic seems to enhance virus replication. This Aves (Human) protein is Neuraminidase.